A 95-amino-acid polypeptide reads, in one-letter code: MTEQVWNFAGIEGGASEIHGAVSTTAGLLDEGKASLTTLASAWGGTGSEAYQAVQARWDSTSNELNLALQNLAQTISEAGQTMAQTEAGVTGMFA.

Belongs to the WXG100 family. ESAT-6 subfamily. Forms a tight 1:1 complex with EsxB. An artificial EsxA-EsxB heterodimer interacts with EspA.

It is found in the secreted. Functionally, an exported protein. Unlike its M.tuberculosis counterpart has poor pore forming ability in artificial liposomes, does not undergo conformational change at acidic pH. Mutation of 2 residues to those found in M.tuberculosis (25-TA-26 to IH) alters the properties of this protein so that it inserts into liposomes at acidic pH, forming pores, like its M.tuberculosis counterpart. The sequence is that of ESAT-6-like protein EsxA from Mycolicibacterium smegmatis (strain ATCC 700084 / mc(2)155) (Mycobacterium smegmatis).